Here is a 196-residue protein sequence, read N- to C-terminus: Nucleoid occlusion factor SlmA (196 aa).

Residues 7–68 (INRREEILQA…GLIEFIEESL (62 aa)) enclose the HTH tetR-type domain. A DNA-binding region (H-T-H motif) is located at residues 31 to 50 (TTAKLAKQVGVSEAALYRHF). Positions 110 to 139 (HALMFENERLRDRINQLFERIETSLRQILR) form a coiled coil.

It belongs to the nucleoid occlusion factor SlmA family. In terms of assembly, homodimer. Interacts with FtsZ.

The protein resides in the cytoplasm. It localises to the nucleoid. Its function is as follows. Required for nucleoid occlusion (NO) phenomenon, which prevents Z-ring formation and cell division over the nucleoid. Acts as a DNA-associated cell division inhibitor that binds simultaneously chromosomal DNA and FtsZ, and disrupts the assembly of FtsZ polymers. SlmA-DNA-binding sequences (SBS) are dispersed on non-Ter regions of the chromosome, preventing FtsZ polymerization at these regions. The protein is Nucleoid occlusion factor SlmA of Vibrio cholerae serotype O1 (strain ATCC 39315 / El Tor Inaba N16961).